Here is a 364-residue protein sequence, read N- to C-terminus: Appendage-associated protein (364 aa).

2 coiled-coil regions span residues 142 to 196 and 288 to 313; these read IIHE…AECR and RIAQAELAAAADALKRAADKLQALGK.

The protein localises to the secreted. Associates with actin filament appendages that are formed in the inclusion appendages of the parasitophorous vacuole during infection of the host erythrocyte. The chain is Appendage-associated protein from Anaplasma marginale (strain Illinois).